Consider the following 493-residue polypeptide: 3-octaprenyl-4-hydroxybenzoate carboxy-lyase (493 aa).

Asn172 is a Mn(2+) binding site. Prenylated FMN-binding positions include 175 to 177 (IYR), 189 to 191 (RWL), and 194 to 195 (RG). Glu238 lines the Mn(2+) pocket. The active-site Proton donor is Asp287.

It belongs to the UbiD family. In terms of assembly, homohexamer. It depends on prenylated FMN as a cofactor. Requires Mn(2+) as cofactor.

Its subcellular location is the cell membrane. It carries out the reaction a 4-hydroxy-3-(all-trans-polyprenyl)benzoate + H(+) = a 2-(all-trans-polyprenyl)phenol + CO2. It functions in the pathway cofactor biosynthesis; ubiquinone biosynthesis. Functionally, catalyzes the decarboxylation of 3-octaprenyl-4-hydroxy benzoate to 2-octaprenylphenol, an intermediate step in ubiquinone biosynthesis. This Shewanella frigidimarina (strain NCIMB 400) protein is 3-octaprenyl-4-hydroxybenzoate carboxy-lyase.